The primary structure comprises 364 residues: Rhomboid domain-containing protein 2 (364 aa).

The next 5 helical transmembrane spans lie at 11 to 31 (WCLC…SLLV), 63 to 83 (LVTY…AIII), 100 to 120 (CFFT…FEAV), 158 to 178 (FGMV…SWLI), and 184 to 204 (LSNV…CYSI). Disordered stretches follow at residues 242–282 (AQSR…KLAS) and 317–364 (SSVY…VPMP). 2 stretches are compositionally biased toward polar residues: residues 267–276 (HPVSQTQHAS) and 317–329 (SSVY…TSLG).

The protein belongs to the peptidase S54 family.

It is found in the golgi apparatus. Its subcellular location is the cis-Golgi network membrane. The chain is Rhomboid domain-containing protein 2 (RHBDD2) from Homo sapiens (Human).